Here is a 37-residue protein sequence, read N- to C-terminus: Large ribosomal subunit protein bL36 (37 aa).

It belongs to the bacterial ribosomal protein bL36 family.

This is Large ribosomal subunit protein bL36 from Beutenbergia cavernae (strain ATCC BAA-8 / DSM 12333 / CCUG 43141 / JCM 11478 / NBRC 16432 / NCIMB 13614 / HKI 0122).